Consider the following 55-residue polypeptide: Large ribosomal subunit protein bL33 (55 aa).

Belongs to the bacterial ribosomal protein bL33 family.

The polypeptide is Large ribosomal subunit protein bL33 (Brucella abortus (strain S19)).